Here is a 346-residue protein sequence, read N- to C-terminus: Selenocysteine Se-methyltransferase (346 aa).

Residues 13–330 (SMKELLKETG…TTIRAIHKRL (318 aa)) enclose the Hcy-binding domain. Zn(2+) is bound by residues cysteine 248, cysteine 315, and cysteine 316.

Requires Zn(2+) as cofactor. In terms of tissue distribution, expressed in roots, young leaves and florets, but not detected in plants not exposed to selenium.

It catalyses the reaction S-methyl-L-methionine + L-selenocysteine = Se-methyl-L-selenocysteine + L-methionine + H(+). Inhibited by L-methionine. Functionally, catalyzes the methylation of DL- and L-selenocysteine with S-methylmethionine as donor. Also methylates DL-homocysteine, DL- and L-cysteine in vitro. May be involved in selenium detoxification. This Brassica oleracea var. italica (Broccoli) protein is Selenocysteine Se-methyltransferase (SMT).